We begin with the raw amino-acid sequence, 249 residues long: MASLGVNIDHIANIREARRTVEPDPVPMAMLAELGGADGITVHLREDRRHIQDRDVELLRQTVRSRLNLEMAATAEMVAIALRVKPDMVTLVPEHRQEVTTEGGLDVVAQLSELTGMVSQLQTSGIPVSLFVDPVASQLRGCTDSGARWVELHTGRYAEGSWNDQPHELARLTEGTATARAMGLRVNAGHGLTYQNVEPVAAIPGMEELNIGHTIVARAVVVGLQQAVREMKALIQNPRRDPLFGQALG.

Asparagine 7 contributes to the 3-amino-2-oxopropyl phosphate binding site. 9-10 (DH) is a 1-deoxy-D-xylulose 5-phosphate binding site. 3-amino-2-oxopropyl phosphate is bound at residue arginine 18. Histidine 43 (proton acceptor) is an active-site residue. Positions 45 and 50 each coordinate 1-deoxy-D-xylulose 5-phosphate. Glutamate 70 serves as the catalytic Proton acceptor. Position 100 (threonine 100) interacts with 1-deoxy-D-xylulose 5-phosphate. The Proton donor role is filled by histidine 190. 3-amino-2-oxopropyl phosphate is bound by residues glycine 191 and 212-213 (GH).

It belongs to the PNP synthase family. In terms of assembly, homooctamer; tetramer of dimers.

It is found in the cytoplasm. The catalysed reaction is 3-amino-2-oxopropyl phosphate + 1-deoxy-D-xylulose 5-phosphate = pyridoxine 5'-phosphate + phosphate + 2 H2O + H(+). The protein operates within cofactor biosynthesis; pyridoxine 5'-phosphate biosynthesis; pyridoxine 5'-phosphate from D-erythrose 4-phosphate: step 5/5. In terms of biological role, catalyzes the complicated ring closure reaction between the two acyclic compounds 1-deoxy-D-xylulose-5-phosphate (DXP) and 3-amino-2-oxopropyl phosphate (1-amino-acetone-3-phosphate or AAP) to form pyridoxine 5'-phosphate (PNP) and inorganic phosphate. The polypeptide is Pyridoxine 5'-phosphate synthase (Synechococcus sp. (strain CC9902)).